The primary structure comprises 91 residues: MKTQTLLVTFLVVLLMVATQTEAGIADILKGLLGKRGLLDGLLGKRGLLFGKRGPLFGKRALTNQDFLDFAYDPSLSAADMDALEMLFEDY.

A signal peptide spans 1 to 23 (MKTQTLLVTFLVVLLMVATQTEA). At L33 the chain carries Leucine amide. Residues 37–91 (GLLDGLLGKRGLLFGKRGPLFGKRALTNQDFLDFAYDPSLSAADMDALEMLFEDY) constitute a propeptide that is removed on maturation.

The protein belongs to the non-disulfide-bridged peptide (NDBP) superfamily. Short antimicrobial peptide (group 4) family. Expressed by the venom gland.

It is found in the secreted. It localises to the target cell membrane. Antimicrobial peptide. This is Peptide Ctry2146 from Chaerilus tryznai (Scorpion).